Consider the following 263-residue polypeptide: Phosphoinositide-3-kinase-interacting protein 1 (263 aa).

A signal peptide spans 1–21 (MLLAWVQAFLVSNMLLAEAYG). Topologically, residues 22–168 (SGGCFWDNGH…NSKEKKDLGT (147 aa)) are extracellular. Positions 24-101 (GCFWDNGHLY…EKRPCENLSC (78 aa)) constitute a Kringle domain. Cystine bridges form between C25–C101, C46–C82, and C70–C96. N98 carries an N-linked (GlcNAc...) asparagine glycan. The helical transmembrane segment at 169–189 (LGYVLGITMMVIIVAIGAGII) threads the bilayer. Residues 190–263 (LGYSYKRGKD…LMGQAGTPGA (74 aa)) lie on the Cytoplasmic side of the membrane. Over residues 242-251 (QTPVDPQEGS) the composition is skewed to polar residues. The segment at 242 to 263 (QTPVDPQEGSTPLMGQAGTPGA) is disordered.

The protein resides in the cell membrane. Its function is as follows. Negative regulator of hepatic phosphatidylinositol 3-kinase (PI3K) activity. The protein is Phosphoinositide-3-kinase-interacting protein 1 (PIK3IP1) of Pongo abelii (Sumatran orangutan).